The following is a 211-amino-acid chain: Probable metallo-hydrolase YqgX (211 aa).

Positions 54, 56, 58, 59, 130, 149, and 190 each coordinate Zn(2+).

This sequence belongs to the metallo-beta-lactamase superfamily. Glyoxalase II family. Requires Zn(2+) as cofactor.

This is Probable metallo-hydrolase YqgX (yqgX) from Bacillus subtilis (strain 168).